Consider the following 282-residue polypeptide: PAK4-inhibitor INKA1 (282 aa).

2 disordered regions span residues 21–50 and 92–127; these read RDTGSPPMSGPLQPKPRTDQNVQPKRQFRA and GFSEVSGSTWREEEPSVPQRQAPRERPPHSQRFSVS. 2 inka box regions span residues 163-200 and 256-282; these read EAEDWTAALLNRGRSRQPLVLGDNCFADLVHNWMELPE and PADISRFAALMNCRSRQPIIYNDVSYL.

The protein belongs to the INKA family. As to quaternary structure, interacts with PAK4. In terms of tissue distribution, expressed in tissues of the developing head during neurulation.

The protein localises to the nucleus. It is found in the cytoplasm. In terms of biological role, inhibitor of the serine/threonine-protein kinase PAK4. Acts by binding PAK4 in a substrate-like manner, inhibiting the protein kinase activity. This Mus musculus (Mouse) protein is PAK4-inhibitor INKA1.